The chain runs to 335 residues: Probable cytosolic iron-sulfur protein assembly protein Ciao1 (335 aa).

WD repeat units follow at residues 12–51 (GHKGRIWGVAWHPKGNVFASCGEDKAIRIWSLTGNTWSTK), 57–96 (GHKRTIREIQWSPCGQYLASASFDATTAIWSKSSGEFECN), 101–140 (GHENEVKSVSWSRSGGLLATCSRDKSVWIWEVAGDDEFEC), 146–185 (SHTQDVKRVVWHPTKEILASASYDNTIKMYAEEPIDNDWD), 192–231 (SHTSTIWGIDFDADGERLVSCSDDTTVKIWRAYHPGNSAG), 250–289 (QHSRAIYDVSWCKLTGLIATACGDDGIRIFKETSDSKPDE), and 301–335 (AHDQDVNSVQWNPVVAGQLISCSDDGTIKIWKVTE).

This sequence belongs to the WD repeat CIA1 family.

Essential component of the cytosolic iron-sulfur (Fe/S) protein assembly machinery. Required for the maturation of extramitochondrial Fe/S proteins. In Drosophila yakuba (Fruit fly), this protein is Probable cytosolic iron-sulfur protein assembly protein Ciao1.